Reading from the N-terminus, the 588-residue chain is Putative pentatricopeptide repeat-containing protein At5g52630 (588 aa).

11 PPR repeats span residues 14–48 (NYNQ…GLSL), 49–79 (IPLV…SPQK), 80–114 (SSTT…NLRP), 115–149 (DDHV…GYDA), 150–180 (DVFV…MPQR), 181–215 (NVVT…NLAV), 216–250 (NDYS…SFDS), 251–281 (SSFV…VPVK), 282–316 (NLGI…GMKP), 317–351 (NFIT…RIEP), and 352–386 (TDKH…PTES). The type E motif stretch occupies residues 387–462 (VWGALLTSCT…ETGLSWVEER (76 aa)). Positions 463–493 (NKVHTFAAGERRHEKSKEIYEKLAELGEEME) are type E(+) motif. The interval 494–588 (KAGYIADTSY…DGKCSCNDYW (95 aa)) is type DYW motif.

It belongs to the PPR family. PCMP-H subfamily.

The chain is Putative pentatricopeptide repeat-containing protein At5g52630 (PCMP-H52) from Arabidopsis thaliana (Mouse-ear cress).